The following is a 364-amino-acid chain: MGAYLIRRLLLVIPTLWAIITINFFIVQIAPGGPVDQAIAAIEFGNAGVLPGAGGEGVRASHAQTGVGNISDSNYRGGRGLDPEVIAEITHRYGFDKPIHERYFKMLWDYIRFDFGDSLFRSASVLTLIKDSLPVSITLGLWSTLIIYLVSIPLGIRKAVYNGSRFDVWSSAFIIIGYAIPAFLFAILLIVFFAGGSYFDLFPLRGLVSANFDSLPWYQKITDYLWHITLPVLATVIGGFAALTMLTKNSFLDEVRKQYVVTARAKGVSEKNILWKHVFRNAMLLVIAGFPATFISMFFTGSLLIEVMFSLNGLGLLGYEATVSRDYPVMFGTLYIFTLIGLLLNIVSDISYTLVDPRIDFEGR.

The Periplasmic portion of the chain corresponds to 1 to 8 (MGAYLIRR). A helical membrane pass occupies residues 9–29 (LLLVIPTLWAIITINFFIVQI). At 30–37 (APGGPVDQ) the chain is on the cytoplasmic side. The chain crosses the membrane as a helical span at residues 38-58 (AIAAIEFGNAGVLPGAGGEGV). Over 59–135 (RASHAQTGVG…LTLIKDSLPV (77 aa)) the chain is Periplasmic. Positions 133-348 (LPVSITLGLW…LIGLLLNIVS (216 aa)) constitute an ABC transmembrane type-1 domain. A helical membrane pass occupies residues 136 to 156 (SITLGLWSTLIIYLVSIPLGI). The Cytoplasmic segment spans residues 157 to 172 (RKAVYNGSRFDVWSSA). The chain crosses the membrane as a helical span at residues 173 to 193 (FIIIGYAIPAFLFAILLIVFF). The Periplasmic segment spans residues 194–224 (AGGSYFDLFPLRGLVSANFDSLPWYQKITDY). Residues 225-245 (LWHITLPVLATVIGGFAALTM) traverse the membrane as a helical segment. At 246–284 (LTKNSFLDEVRKQYVVTARAKGVSEKNILWKHVFRNAML) the chain is on the cytoplasmic side. The chain crosses the membrane as a helical span at residues 285–305 (LVIAGFPATFISMFFTGSLLI). Residues 306–326 (EVMFSLNGLGLLGYEATVSRD) lie on the Periplasmic side of the membrane. Residues 327-347 (YPVMFGTLYIFTLIGLLLNIV) form a helical membrane-spanning segment. At 348-364 (SDISYTLVDPRIDFEGR) the chain is on the cytoplasmic side.

Belongs to the binding-protein-dependent transport system permease family. OppBC subfamily.

Its subcellular location is the cell inner membrane. Functionally, probably part of a binding-protein-dependent transport system. Probably responsible for the translocation of the substrate across the membrane. This chain is Inner membrane ABC transporter permease protein YejB (yejB), found in Escherichia coli O157:H7.